A 283-amino-acid chain; its full sequence is Pantothenate synthetase (283 aa).

Met-30–His-37 provides a ligand contact to ATP. The Proton donor role is filled by His-37. (R)-pantoate is bound at residue Gln-61. Residue Gln-61 coordinates beta-alanine. Gly-149–Asp-152 is a binding site for ATP. A (R)-pantoate-binding site is contributed by Gln-155. Leu-186–Arg-189 contacts ATP.

The protein belongs to the pantothenate synthetase family. Homodimer.

Its subcellular location is the cytoplasm. It catalyses the reaction (R)-pantoate + beta-alanine + ATP = (R)-pantothenate + AMP + diphosphate + H(+). The protein operates within cofactor biosynthesis; (R)-pantothenate biosynthesis; (R)-pantothenate from (R)-pantoate and beta-alanine: step 1/1. In terms of biological role, catalyzes the condensation of pantoate with beta-alanine in an ATP-dependent reaction via a pantoyl-adenylate intermediate. The protein is Pantothenate synthetase of Escherichia coli O17:K52:H18 (strain UMN026 / ExPEC).